Reading from the N-terminus, the 694-residue chain is MAREYKIEDYRNFGIMAHIDAGKTTMTERILFYTGKNHKIGETHDGASTMDWMEQEQERGITITSAATTTFWQGRDGKKRRFNIIDTPGHVDFTIEVERSLRVLDGAIALLDANAGVEPQTETVWRQAEKYHVPRMVFVNKMDKIGADFYRSVEMVGSRLGAVALPVQLPIGAENDFVGVVDLIEMKALTWDGTIGAPATVGEIPADMADKAEEYREKLIELAVEIDEAAMEAYLEGTMPTNDELRALIRKGTIEVKFHPILCGTAFKNRGVQPLLDAVVEFLPAPTDVPAIKGIDVKTETETTRESSDEAPLSMLAFKIMNDPFVGSLTFARIYSGKLTKGVSLENTVKGKRERIGRMLQMHSNSREDIDEAFAGDIVALAGLKETTTGDTLCDPLKPVILERMEFPDPVIEIAIEPKTKADQEKMGIALNRLAAEDPSFRVKSDEESGQTIIAGMGELHLDILVDRMKREFKVEANVGAPQVAYRESITRAAEIDYTHKKQSGGSGQFARVKIIFEPHDGDDFIFESKIVGGSVPKEYIPGVQKGIESVMGAGPLAGFPMLGVKATLIDGTYHDVDSSVLAFEIASRAAFREGAQKAGAQLLEPIMKVEVVTPEDYVGDVIGDLNSRRGQISGTEARGIATVVNAMVPLANMFGYVNSLRSMSQGRAQYTMQFDHYEPVPTAVAQEIQKKFA.

The tr-type G domain maps to 8–287 (EDYRNFGIMA…AVVEFLPAPT (280 aa)). Residues 17–24 (AHIDAGKT), 86–90 (DTPGH), and 140–143 (NKMD) each bind GTP.

The protein belongs to the TRAFAC class translation factor GTPase superfamily. Classic translation factor GTPase family. EF-G/EF-2 subfamily.

The protein localises to the cytoplasm. Catalyzes the GTP-dependent ribosomal translocation step during translation elongation. During this step, the ribosome changes from the pre-translocational (PRE) to the post-translocational (POST) state as the newly formed A-site-bound peptidyl-tRNA and P-site-bound deacylated tRNA move to the P and E sites, respectively. Catalyzes the coordinated movement of the two tRNA molecules, the mRNA and conformational changes in the ribosome. The protein is Elongation factor G of Brucella melitensis biotype 2 (strain ATCC 23457).